The following is a 150-amino-acid chain: Linear element protein rec25 (150 aa).

S11 carries the phosphoserine modification.

In terms of assembly, component of linear elements (LinEs), which are similar to synaptonemal complexes, at least composed of rec27, rec25, rec10 and mug20. Interacts with rec10; the interaction is direct.

The protein localises to the cytoplasm. It localises to the nucleus. It is found in the chromosome. In terms of biological role, during meiotic DNA recombination, binds to and may help activate DNA double-strand break (DSB) hotspot sites. The sequence is that of Linear element protein rec25 from Schizosaccharomyces pombe (strain 972 / ATCC 24843) (Fission yeast).